Reading from the N-terminus, the 494-residue chain is Glutamate--tRNA ligase (494 aa).

The 'HIGH' region motif lies at 9 to 19; sequence PSPTGPLHIGS. The 'KMSKS' region signature appears at 249–253; it reads KLSKR. Position 252 (K252) interacts with ATP.

This sequence belongs to the class-I aminoacyl-tRNA synthetase family. Glutamate--tRNA ligase type 1 subfamily. As to quaternary structure, monomer.

The protein localises to the cytoplasm. The enzyme catalyses tRNA(Glu) + L-glutamate + ATP = L-glutamyl-tRNA(Glu) + AMP + diphosphate. Catalyzes the attachment of glutamate to tRNA(Glu) in a two-step reaction: glutamate is first activated by ATP to form Glu-AMP and then transferred to the acceptor end of tRNA(Glu). This Azobacteroides pseudotrichonymphae genomovar. CFP2 protein is Glutamate--tRNA ligase.